The following is a 130-amino-acid chain: Small ribosomal subunit protein uS11 (130 aa).

The protein belongs to the universal ribosomal protein uS11 family. In terms of assembly, part of the 30S ribosomal subunit. Interacts with proteins S7 and S18. Binds to IF-3.

Its function is as follows. Located on the platform of the 30S subunit, it bridges several disparate RNA helices of the 16S rRNA. Forms part of the Shine-Dalgarno cleft in the 70S ribosome. The polypeptide is Small ribosomal subunit protein uS11 (Buchnera aphidicola subsp. Schizaphis graminum (strain Sg)).